Consider the following 248-residue polypeptide: 3-deoxy-manno-octulosonate cytidylyltransferase (248 aa).

Belongs to the KdsB family.

It is found in the cytoplasm. The enzyme catalyses 3-deoxy-alpha-D-manno-oct-2-ulosonate + CTP = CMP-3-deoxy-beta-D-manno-octulosonate + diphosphate. It participates in nucleotide-sugar biosynthesis; CMP-3-deoxy-D-manno-octulosonate biosynthesis; CMP-3-deoxy-D-manno-octulosonate from 3-deoxy-D-manno-octulosonate and CTP: step 1/1. It functions in the pathway bacterial outer membrane biogenesis; lipopolysaccharide biosynthesis. Functionally, activates KDO (a required 8-carbon sugar) for incorporation into bacterial lipopolysaccharide in Gram-negative bacteria. This is 3-deoxy-manno-octulosonate cytidylyltransferase from Shigella boydii serotype 18 (strain CDC 3083-94 / BS512).